Here is a 259-residue protein sequence, read N- to C-terminus: LOB domain-containing protein CRL1 (259 aa).

One can recognise an LOB domain in the interval 6-108 (SPCGACKFLR…AQLASLKAAA (103 aa)).

This sequence belongs to the LOB domain-containing protein family. As to quaternary structure, can form homodimers. In terms of tissue distribution, expressed in unelongating basal internodes, at the base of shoot in parenchyma cells adjacent to the peripheral vascular cylinder of the stem, and root pericycle cells. Expressed in lateral and adventitious root primordia, tiller primordia, vascular tissues, scutellum, and young pedicels.

It is found in the nucleus. Acts as a positive regulator of adventitious (crown) root formation by promoting its initiation. Acts as a positive regulator of lateral root formation. Regulated by the auxin response factor and transcriptional activator ARF23/ARF1. Involved in auxin-mediated cell dedifferentiation, and may promote the initial cell division in the pericycle cells adjacent to the peripheral vascular cylinder at the base of the stem. May act upstream of the gene regulatory network controlling adventitious root (crown) development. The chain is LOB domain-containing protein CRL1 from Oryza sativa subsp. japonica (Rice).